Consider the following 892-residue polypeptide: Zinc finger protein 473 homolog (892 aa).

Positions 23–101 constitute a KRAB domain; sequence ETLKDLAMDF…TKSSPLQSGF (79 aa). Polar residues-rich tracts occupy residues 66–76 and 84–97; these read DTSQPSLTSQP and ATSTEVPETKSSPL. Disordered regions lie at residues 66-97 and 134-203; these read DTSQPSLTSQPDVREELEATSTEVPETKSSPL and GDPE…DSVQ. 2 stretches are compositionally biased toward basic and acidic residues: residues 138–156 and 190–203; these read SLPRPDISDKESPADHQSP and KESRSDLSQEDSVQ. 2 consecutive C2H2-type zinc fingers follow at residues 209–231 and 265–287; these read YKCSECGESFSQSHHLIQHWVLH and YTCQECGKRFSQNVYLQWHQKIH. Residues 297-308 show a composition bias toward polar residues; the sequence is SDSNLEGLSRSP. The tract at residues 297-370 is disordered; the sequence is SDSNLEGLSR…HPKPLRHQKT (74 aa). Composition is skewed to basic and acidic residues over residues 313–323 and 332–353; these read GKQRLSKDTDS and QDQEKPPTGESRDQENLHESQP. 8 consecutive C2H2-type zinc fingers follow at residues 377–399, 404–426, 432–454, 460–482, 488–510, 516–538, 544–566, and 572–594; these read FRCKKCGETFSGAFHLAKHQRAH, YKCASCPAVFNLSKHCFQHRKSH, CECQGCRKSFNWRSSLIKHQAIH, YKCDECGKAFNHSSTLKIHQRIH, HKCSECGKAFCRRTDLTEHQRVH, HQCPVCARTFNRPSHLVRHRLRH, FGCAKCKETFIYKEQLERHNKIH, and YECKQCGEHFICRSTLNCHLSIH. Lys-476 is covalently cross-linked (Glycyl lysine isopeptide (Lys-Gly) (interchain with G-Cter in SUMO2)). Lys-602 is covalently cross-linked (Glycyl lysine isopeptide (Lys-Gly) (interchain with G-Cter in SUMO2)). A C2H2-type 11; degenerate zinc finger spans residues 697–719; that stretch reads FKCDIYNRAFKQRAHLSKHQLIH. 6 consecutive C2H2-type zinc fingers follow at residues 725 to 747, 753 to 775, 781 to 803, 809 to 831, 837 to 859, and 865 to 887; these read FKCNECDRAFKQSNYLIQHQKTH, FECSECGKTFHQRSCLSKHQKIH, FKCGDCGKAFISGAQLIRHQRIH, YVCQECGKTFSQSSCLTLHLRIH, YTCGTCGKAFAQRANQRKHERIH, and YACGLCGKAFGLRTHLQQHQRIH.

This sequence belongs to the krueppel C2H2-type zinc-finger protein family. In terms of assembly, interacts with the SLBP/pre-mRNA complex but not with SLBP alone. Interacts with LSM11 in a U7 snRNP-dependent manner.

It is found in the nucleus. Its function is as follows. Involved in histone 3'-end pre-mRNA processing by associating with U7 snRNP and interacting with SLBP/pre-mRNA complex. Increases histone 3'-end pre-mRNA processing but has no effect on U7 snRNP levels, when overexpressed. Required for cell cycle progression from G1 to S phases. The sequence is that of Zinc finger protein 473 homolog (Znf473) from Mus musculus (Mouse).